The chain runs to 433 residues: Divergent protein kinase domain 2B (433 aa).

The signal sequence occupies residues 1–31; it reads MEPQLGPEAAALRPGWLALLLWVSALSCSFS. An N-linked (GlcNAc...) asparagine glycan is attached at asparagine 100.

Belongs to the DIPK family.

The protein localises to the secreted. In Homo sapiens (Human), this protein is Divergent protein kinase domain 2B.